Consider the following 73-residue polypeptide: DNA gyrase inhibitor YacG (73 aa).

Positions 12, 15, 31, and 35 each coordinate Zn(2+). Residues 47 to 73 (DYAIPGEPIDPAEPSEDRNGAEGPPTD) are disordered.

It belongs to the DNA gyrase inhibitor YacG family. As to quaternary structure, interacts with GyrB. It depends on Zn(2+) as a cofactor.

In terms of biological role, inhibits all the catalytic activities of DNA gyrase by preventing its interaction with DNA. Acts by binding directly to the C-terminal domain of GyrB, which probably disrupts DNA binding by the gyrase. This chain is DNA gyrase inhibitor YacG, found in Methylococcus capsulatus (strain ATCC 33009 / NCIMB 11132 / Bath).